Consider the following 1498-residue polypeptide: Transposon Ty3-I Gag-Pol polyprotein (1498 aa).

Residues 265–282 form a CCHC-type zinc finger; the sequence is RLCFYCKKEGHRLNECRA. The For protease activity; shared with dimeric partner role is filled by aspartate 336. The interval 470 to 490 is disordered; that stretch reads TDPKSAGNRGNPRNTKLSLAP. The region spanning 646 to 823 is the Reverse transcriptase domain; that stretch reads LDNKFIVPSK…EETEFLGYSI (178 aa). Residues aspartate 712, aspartate 774, and aspartate 775 each contribute to the Mg(2+) site. One can recognise an RNase H Ty3/gyspy-type domain in the interval 919 to 1037; that stretch reads DASKDGIGAV…VADAISRAIY (119 aa). Positions 1132-1171 are integrase-type zinc finger-like; the sequence is HTLFGGHFGVTVTLAKISPIYYWPKLQHSIIQYIRTCVQC. The 166-residue stretch at 1185-1350 folds into the Integrase catalytic domain; that stretch reads LQPLPIAEGR…SPFEIDLGYL (166 aa). Mg(2+)-binding residues include aspartate 1201 and aspartate 1262.

In terms of assembly, the protease is a homodimer, whose active site consists of two apposed aspartic acid residues. Initially, virus-like particles (VLPs) are composed of the structural unprocessed proteins Gag and Gag-Pol, and also contain the host initiator methionine tRNA (tRNA(i)-Met) which serves as a primer for minus-strand DNA synthesis, and a dimer of genomic Ty RNA. Processing of the polyproteins occurs within the particle and proceeds by an ordered pathway, called maturation. First, the protease (PR) is released by autocatalytic cleavage of the Gag-Pol polyprotein, and this cleavage is a prerequisite for subsequent processing at the remaining sites to release the mature structural and catalytic proteins. Maturation takes place prior to the RT reaction and is required to produce transposition-competent VLPs.

It is found in the cytoplasm. The protein localises to the nucleus. The enzyme catalyses DNA(n) + a 2'-deoxyribonucleoside 5'-triphosphate = DNA(n+1) + diphosphate. It catalyses the reaction Endonucleolytic cleavage to 5'-phosphomonoester.. In terms of biological role, capsid protein (CA) is the structural component of the virus-like particle (VLP), forming the shell that encapsulates the genomic RNA-nucleocapsid complex. Its function is as follows. Nucleocapsid protein p11 (NC) forms the nucleocore that coats the retro-elements dimeric RNA. Binds these RNAs through its zinc fingers. Promotes primer tRNA(i)-Met annealing to the multipartite primer-binding site (PBS), dimerization of Ty3 RNA and initiation of reverse transcription. Functionally, the aspartyl protease (PR) mediates the proteolytic cleavages of the Gag and Gag-Pol polyproteins after assembly of the VLP. Reverse transcriptase/ribonuclease H (RT) is a multifunctional enzyme that catalyzes the conversion of the retro-elements RNA genome into dsDNA within the VLP. The enzyme displays a DNA polymerase activity that can copy either DNA or RNA templates, and a ribonuclease H (RNase H) activity that cleaves the RNA strand of RNA-DNA heteroduplexes during plus-strand synthesis and hydrolyzes RNA primers. The conversion leads to a linear dsDNA copy of the retrotransposon that includes long terminal repeats (LTRs) at both ends. In terms of biological role, integrase (IN) targets the VLP to the nucleus, where a subparticle preintegration complex (PIC) containing at least integrase and the newly synthesized dsDNA copy of the retrotransposon must transit the nuclear membrane. Once in the nucleus, integrase performs the integration of the dsDNA into the host genome. The protein is Transposon Ty3-I Gag-Pol polyprotein (TY3B-I) of Saccharomyces cerevisiae (strain ATCC 204508 / S288c) (Baker's yeast).